The sequence spans 122 residues: Small ribosomal subunit protein uS12 (122 aa).

Asp89 bears the 3-methylthioaspartic acid mark.

This sequence belongs to the universal ribosomal protein uS12 family. In terms of assembly, part of the 30S ribosomal subunit. Contacts proteins S8 and S17. May interact with IF1 in the 30S initiation complex.

With S4 and S5 plays an important role in translational accuracy. Functionally, interacts with and stabilizes bases of the 16S rRNA that are involved in tRNA selection in the A site and with the mRNA backbone. Located at the interface of the 30S and 50S subunits, it traverses the body of the 30S subunit contacting proteins on the other side and probably holding the rRNA structure together. The combined cluster of proteins S8, S12 and S17 appears to hold together the shoulder and platform of the 30S subunit. This Corynebacterium glutamicum (strain R) protein is Small ribosomal subunit protein uS12.